We begin with the raw amino-acid sequence, 349 residues long: ATPase GET3 (349 aa).

26–33 (KGGVGKTT) lines the ATP pocket. The active site involves aspartate 57. Residues glutamate 243 and asparagine 270 each coordinate ATP. The Zn(2+) site is built by cysteine 280 and cysteine 283.

Belongs to the arsA ATPase family. Homodimer. Component of the Golgi to ER traffic (GET) complex, which is composed of GET1, GET2 and GET3. Within the complex, GET1 and GET2 form a heterotetramer which is stabilized by phosphatidylinositol binding and which binds to the GET3 homodimer. Interacts with the chloride channel protein GEF1.

It localises to the cytoplasm. It is found in the endoplasmic reticulum. Its subcellular location is the golgi apparatus. In terms of biological role, ATPase required for the post-translational delivery of tail-anchored (TA) proteins to the endoplasmic reticulum. Recognizes and selectively binds the transmembrane domain of TA proteins in the cytosol. This complex then targets to the endoplasmic reticulum by membrane-bound receptors GET1 and GET2, where the tail-anchored protein is released for insertion. This process is regulated by ATP binding and hydrolysis. ATP binding drives the homodimer towards the closed dimer state, facilitating recognition of newly synthesized TA membrane proteins. ATP hydrolysis is required for insertion. Subsequently, the homodimer reverts towards the open dimer state, lowering its affinity for the GET1-GET2 receptor, and returning it to the cytosol to initiate a new round of targeting. Cooperates with the HDEL receptor ERD2 to mediate the ATP-dependent retrieval of resident ER proteins that contain a C-terminal H-D-E-L retention signal from the Golgi to the ER. Involved in low-level resistance to the oxyanions arsenite and arsenate, and in heat tolerance. The chain is ATPase GET3 from Clavispora lusitaniae (strain ATCC 42720) (Yeast).